A 985-amino-acid chain; its full sequence is Regulator of telomere elongation helicase 1 homolog (985 aa).

In terms of domain architecture, Helicase ATP-binding spans Ala-7–Asp-303. Ser-42–Thr-49 is an ATP binding site. Cys-146, Cys-164, Cys-173, and Cys-209 together coordinate [4Fe-4S] cluster. The DEAH box motif lies at Asp-252–His-255. Phosphothreonine is present on Thr-874.

It belongs to the helicase family. RAD3/XPD subfamily.

It localises to the nucleus. It carries out the reaction ATP + H2O = ADP + phosphate + H(+). Functionally, a probable ATP-dependent DNA helicase implicated in DNA repair and the maintenance of genomic stability. Acts as an anti-recombinase to counteract toxic recombination and limit crossover during meiosis. Regulates meiotic recombination and crossover homeostasis by physically dissociating strand invasion events and thereby promotes noncrossover repair by meiotic synthesis dependent strand annealing (SDSA) as well as disassembly of D loop recombination intermediates. The chain is Regulator of telomere elongation helicase 1 homolog from Drosophila erecta (Fruit fly).